Reading from the N-terminus, the 298-residue chain is ADP/ATP translocase 2 (298 aa).

An N-acetylmethionine modification is found at Met-1. At 1–7 (MTDAAVS) the chain is on the mitochondrial intermembrane side. Thr-2 is subject to N-acetylthreonine; in ADP/ATP translocase 2, N-terminally processed. The stretch at 6-98 (VSFAKDFLAG…FAFKDKYKQI (93 aa)) is one Solcar 1 repeat. The residue at position 7 (Ser-7) is a Phosphoserine. Residues 8–37 (FAKDFLAGGVAAAISKTAVAPIERVKLLLQ) traverse the membrane as a helical segment. Position 23 is an N6-malonyllysine (Lys-23). Over 38 to 74 (VQHASKQITADKQYKGIIDCVVRIPKEQGVLSFWRGN) the chain is Mitochondrial matrix. Residue Lys-43 is modified to N6-succinyllysine. N6,N6,N6-trimethyllysine; alternate is present on Lys-52. Lys-52 carries the N6,N6-dimethyllysine; alternate modification. Lys-52 bears the N6-methyllysine; alternate mark. Residues 75-99 (LANVIRYFPTQALNFAFKDKYKQIF) traverse the membrane as a helical segment. ADP-binding residues include Arg-80 and Lys-92. 2 positions are modified to N6-malonyllysine: Lys-92 and Lys-96. Residues 100–109 (LGGVDKRTQF) lie on the Mitochondrial intermembrane side of the membrane. Lys-105 is modified (N6-acetyllysine; alternate). Lys-105 carries the post-translational modification N6-succinyllysine; alternate. The chain crosses the membrane as a helical span at residues 110–130 (WRYFAGNLASGGAAGATSLCF). 2 Solcar repeats span residues 111-201 (RYFA…AKGM) and 212-297 (ISWM…IKKF). At 131-178 (VYPLDFARTRLAADVGKAGAEREFRGLGDCLVKIYKSDGIRGLYQGFN) the chain is on the mitochondrial matrix side. Lys-147 is modified (N6-methyllysine; alternate). At Lys-147 the chain carries N6-acetyllysine; alternate. Lys-147 bears the N6-succinyllysine; alternate mark. Lys-147 carries the N6-malonyllysine; alternate modification. Lys-163 and Lys-166 each carry N6-acetyllysine. A helical membrane pass occupies residues 179–199 (VSVQGIIIYRAAYFGIYDTAK). The Mitochondrial intermembrane segment spans residues 200-210 (GMLPDPKNTHI). Residues 211 to 231 (FISWMIAQSVTAVAGLTSYPF) traverse the membrane as a helical segment. The Mitochondrial matrix portion of the chain corresponds to 232–273 (DTVRRRMMMQSGRKGTDIMYTGTLDCWRKIARDEGAKAFFKG). An ADP-binding site is contributed by Arg-235. Residues 235-240 (RRRMMM) form an important for transport activity region. Residues 235–240 (RRRMMM) carry the Nucleotide carrier signature motif motif. An N6-acetyllysine; alternate modification is found at Lys-268. The residue at position 268 (Lys-268) is an N6-succinyllysine; alternate. A helical membrane pass occupies residues 274 to 291 (AWSNVLRGMGGAFVLVLY). Over 292–298 (DEIKKFT) the chain is Mitochondrial intermembrane.

This sequence belongs to the mitochondrial carrier (TC 2.A.29) family. In terms of assembly, monomer. Component of the MMXD complex, which includes CIAO1, ERCC2, CIAO2B, MMS19 and SLC25A5/ANT2. Interacts with AK4. Interacts with TIMM44; leading to inhibit the presequence translocase TIMM23, thereby promoting stabilization of PINK1. In terms of processing, trimethylated by ANTKMT at Lys-52.

Its subcellular location is the mitochondrion inner membrane. It localises to the membrane. It catalyses the reaction ADP(in) + ATP(out) = ADP(out) + ATP(in). The enzyme catalyses H(+)(in) = H(+)(out). The matrix-open state (m-state) is inhibited by the membrane-permeable bongkrekic acid (BKA). The cytoplasmic-open state (c-state) is inhibited by the membrane-impermeable toxic inhibitor carboxyatractyloside (CATR). Proton transporter activity is inhibited by ADP:ATP antiporter activity. ADP:ATP antiporter that mediates import of ADP into the mitochondrial matrix for ATP synthesis, and export of ATP out to fuel the cell. Cycles between the cytoplasmic-open state (c-state) and the matrix-open state (m-state): operates by the alternating access mechanism with a single substrate-binding site intermittently exposed to either the cytosolic (c-state) or matrix (m-state) side of the inner mitochondrial membrane. In addition to its ADP:ATP antiporter activity, also involved in mitochondrial uncoupling and mitochondrial permeability transition pore (mPTP) activity. Plays a role in mitochondrial uncoupling by acting as a proton transporter: proton transport uncouples the proton flows via the electron transport chain and ATP synthase to reduce the efficiency of ATP production and cause mitochondrial thermogenesis. Proton transporter activity is inhibited by ADP:ATP antiporter activity, suggesting that SLC25A5/ANT2 acts as a master regulator of mitochondrial energy output by maintaining a delicate balance between ATP production (ADP:ATP antiporter activity) and thermogenesis (proton transporter activity). Proton transporter activity requires free fatty acids as cofactor, but does not transport it. Probably mediates mitochondrial uncoupling in tissues that do not express UCP1. Also plays a key role in mPTP opening, a non-specific pore that enables free passage of the mitochondrial membranes to solutes of up to 1.5 kDa, and which contributes to cell death. It is however unclear if SLC25A5/ANT2 constitutes a pore-forming component of mPTP or regulates it. Acts as a regulator of mitophagy independently of ADP:ATP antiporter activity: promotes mitophagy via interaction with TIMM44, leading to inhibit the presequence translocase TIMM23, thereby promoting stabilization of PINK1. As part of the mitotic spindle-associated MMXD complex it may play a role in chromosome segregation. This is ADP/ATP translocase 2 from Bos taurus (Bovine).